A 61-amino-acid chain; its full sequence is Large ribosomal subunit protein bL32 (61 aa).

Residues 1–16 (MAVPKKKTSKSRKNMR) show a composition bias toward basic residues. The disordered stretch occupies residues 1–20 (MAVPKKKTSKSRKNMRRAHD).

The protein belongs to the bacterial ribosomal protein bL32 family.

The polypeptide is Large ribosomal subunit protein bL32 (Trichlorobacter lovleyi (strain ATCC BAA-1151 / DSM 17278 / SZ) (Geobacter lovleyi)).